A 367-amino-acid chain; its full sequence is Putative C-&gt;U-editing enzyme APOBEC-4 (367 aa).

The region spanning 61-177 (PQTKHLTFYE…AWNREALRSL (117 aa)) is the CMP/dCMP-type deaminase domain. Histidine 93 contacts Zn(2+). Glutamate 95 (proton donor) is an active-site residue. The Zn(2+) site is built by cysteine 127 and cysteine 134.

Belongs to the cytidine and deoxycytidylate deaminase family. Zn(2+) is required as a cofactor. As to expression, predominantly expressed in testis.

In terms of biological role, putative C to U editing enzyme whose physiological substrate is not yet known. The sequence is that of Putative C-&gt;U-editing enzyme APOBEC-4 (APOBEC4) from Homo sapiens (Human).